Consider the following 570-residue polypeptide: MSYKMSRAAYANMFGPTVGDKVRLADTELFIEVERDFTTHGEEVKFGGGKVIRDGMGQSQVTREGGAVDTVITNALIVDHWGIVKADIGLKDGRISAIGKAGNPDTQAGVTIIVGPGTEVIAGEGKIVTAGGMDSHIHFICPQQIDEALMSGITCMLGGGTGPAHGTLATTCTPGPWHIARMIEAADAFPMNLAFAGKGNASLPGALVEMVLGGATSLKLHEDWGTTPAAIDCCLSVADEYDVQVMIHTDTLNESGFVEDTIAAIKGRTIHAYHTEGAGGGHAPDIIRICGQPNVIPSSTNPTRPYTVNTLAEHLDMLMVCHHLSPSIPEDIAFAESRIRKETIAAEDILHDIGAFSIISSDSQAMGRVGEVAIRTWQTADKMKRQRGRLKEESGGNDNFRVKRYIAKYTINPAIAHGLSHEIGSLETGKRADLVLWNPTFFGVKPDMVLLGGTIAAAPMGDPNASIPTPQPVHYRPMFGAYGKSRTNSSVTFVSQASLDAGLAGRLGVAKALVAVQNTRGGIGKASMVHNSLTPHIEVDPETYEVRANGELLTCEPASVLPMAQRYFLF.

The region spanning 131–570 (GGMDSHIHFI…LPMAQRYFLF (440 aa)) is the Urease domain. Ni(2+)-binding residues include H136, H138, and K219. An N6-carboxylysine modification is found at K219. H221 lines the substrate pocket. Ni(2+) is bound by residues H248 and H274. Catalysis depends on H322, which acts as the Proton donor. D362 contributes to the Ni(2+) binding site.

Belongs to the metallo-dependent hydrolases superfamily. Urease alpha subunit family. In terms of assembly, heterotrimer of UreA (gamma), UreB (beta) and UreC (alpha) subunits. Three heterotrimers associate to form the active enzyme. Ni cation is required as a cofactor. Post-translationally, carboxylation allows a single lysine to coordinate two nickel ions.

The protein localises to the cytoplasm. The enzyme catalyses urea + 2 H2O + H(+) = hydrogencarbonate + 2 NH4(+). It functions in the pathway nitrogen metabolism; urea degradation; CO(2) and NH(3) from urea (urease route): step 1/1. This chain is Urease subunit alpha, found in Sinorhizobium medicae (strain WSM419) (Ensifer medicae).